Here is a 152-residue protein sequence, read N- to C-terminus: Putative polyketide cyclase (152 aa).

To polyketide cyclases.

It participates in antibiotic biosynthesis; curamycin biosynthesis. The chain is Putative polyketide cyclase (curF) from Streptomyces cyaneus (Streptomyces curacoi).